The chain runs to 583 residues: CTP synthase (583 aa).

Positions 1–278 are amidoligase domain; it reads MRRHPQTATK…DAFVVRRLNL (278 aa). S20 is a CTP binding site. S20 contacts UTP. ATP contacts are provided by residues 21–26 and D78; that span reads SLGKGL. Positions 78 and 152 each coordinate Mg(2+). CTP is bound by residues 159 to 161, 199 to 204, and K235; these read DIE and KTKPTQ. UTP contacts are provided by residues 199-204 and K235; that span reads KTKPTQ. A Glutamine amidotransferase type-1 domain is found at 303-551; that stretch reads RIALVGKYVE…VKAAIDYKEG (249 aa). G366 is a binding site for L-glutamine. C393 (nucleophile; for glutamine hydrolysis) is an active-site residue. L-glutamine-binding positions include 394-397, E416, and R477; that span reads LGLQ. Active-site residues include H524 and E526. The segment at 559–583 is disordered; the sequence is PERVSNGAERRDQVGQSIPEPANRG.

It belongs to the CTP synthase family. As to quaternary structure, homotetramer.

It catalyses the reaction UTP + L-glutamine + ATP + H2O = CTP + L-glutamate + ADP + phosphate + 2 H(+). The catalysed reaction is L-glutamine + H2O = L-glutamate + NH4(+). It carries out the reaction UTP + NH4(+) + ATP = CTP + ADP + phosphate + 2 H(+). It participates in pyrimidine metabolism; CTP biosynthesis via de novo pathway; CTP from UDP: step 2/2. Its activity is regulated as follows. Allosterically activated by GTP, when glutamine is the substrate; GTP has no effect on the reaction when ammonia is the substrate. The allosteric effector GTP functions by stabilizing the protein conformation that binds the tetrahedral intermediate(s) formed during glutamine hydrolysis. Inhibited by the product CTP, via allosteric rather than competitive inhibition. In terms of biological role, catalyzes the ATP-dependent amination of UTP to CTP with either L-glutamine or ammonia as the source of nitrogen. Regulates intracellular CTP levels through interactions with the four ribonucleotide triphosphates. In Mycobacterium marinum (strain ATCC BAA-535 / M), this protein is CTP synthase.